A 563-amino-acid chain; its full sequence is Adenine deaminase (563 aa).

Belongs to the metallo-dependent hydrolases superfamily. Adenine deaminase family. It depends on Mn(2+) as a cofactor.

It carries out the reaction adenine + H2O + H(+) = hypoxanthine + NH4(+). The polypeptide is Adenine deaminase (Brucella anthropi (strain ATCC 49188 / DSM 6882 / CCUG 24695 / JCM 21032 / LMG 3331 / NBRC 15819 / NCTC 12168 / Alc 37) (Ochrobactrum anthropi)).